A 368-amino-acid chain; its full sequence is Cyclin-dependent kinase 2 (368 aa).

The Protein kinase domain occupies 45–330 (FCSLRRIGEG…AKGALSHRYF (286 aa)). Residues 51-59 (IGEGTYGVV) and Lys-74 each bind ATP. The Proton acceptor role is filled by Asp-170. Mg(2+) is bound by residues Asn-175 and Asp-188.

It belongs to the protein kinase superfamily. CMGC Ser/Thr protein kinase family. CDC2/CDKX subfamily. In terms of assembly, interacts with cye-1; the interaction likely regulates cdk-2 activity and is probably required for gld-1 phosphorylation. Requires Mg(2+) as cofactor.

The enzyme catalyses L-seryl-[protein] + ATP = O-phospho-L-seryl-[protein] + ADP + H(+). It carries out the reaction L-threonyl-[protein] + ATP = O-phospho-L-threonyl-[protein] + ADP + H(+). Serine/threonine-protein kinase which, in association with cye-1, regulates proliferation, quiescent state and cell fate during the development of several cell lineages. In the embryo, initiates the establishment of cell polarity through the recruitment of the centrosomal proteins spd-2 and spd-5 during prophase. Phosphorylation and inhibition of the translational repressor gld-1 by the cdk-2/cye-1 complex regulates the pool of germline stem cells and the size of the mitotic zone in the gonads by preventing entry into meiosis. The polypeptide is Cyclin-dependent kinase 2 (Caenorhabditis elegans).